The chain runs to 366 residues: Ferredoxin--NADP reductase, leaf isozyme 2, chloroplastic (366 aa).

Residues 1 to 48 constitute a chloroplast transit peptide; sequence MAAVNTVSSLPCSKAGAAVAGGAPRPSTCSVFYPPRCWSKRSSGNGVR. Positions 87 to 209 constitute an FAD-binding FR-type domain; the sequence is KEPYTGRCLL…TGPVGKEMLM (123 aa). FAD contacts are provided by residues 145–148, 166–168, Y172, and 183–185; these read RLYS, CVK, and VCS. Positions 148 and 168 each coordinate NADP(+). A disulfide bond links C184 and C189. S185 carries the phosphoserine modification. T216 is modified (phosphothreonine). T224 lines the FAD pocket. Residues T224, 256-257, 286-287, K296, 325-326, and E364 each bind NADP(+); these read VP, SR, and GL.

Belongs to the ferredoxin--NADP reductase type 1 family. In terms of assembly, heterodimer with LFNR1. Component of high molecular weight thylakoid LFNRs-containing protein complexes containing LIR1, LFNR1, LFNR2, TIC62 and TROL proteins. Interacts directly with LIR1 and TIC62; LIR1 increases the affinity of LFNR1 and LFNR2 for TIC62. The cofactor is FAD. Post-translationally, may form interchain disulfide bonds with LIR1.

It localises to the plastid. The protein resides in the chloroplast stroma. Its subcellular location is the chloroplast thylakoid membrane. It carries out the reaction 2 reduced [2Fe-2S]-[ferredoxin] + NADP(+) + H(+) = 2 oxidized [2Fe-2S]-[ferredoxin] + NADPH. It participates in energy metabolism; photosynthesis. Plays a key role in regulating the relative amounts of cyclic and non-cyclic electron flow to meet the demands of the plant for ATP and reducing power. This Oryza sativa subsp. japonica (Rice) protein is Ferredoxin--NADP reductase, leaf isozyme 2, chloroplastic.